The sequence spans 684 residues: MTAVASSAPAAPIRVPAGTTAGAAVREADLPGRGAPDAIVVVRDAEGRLRDLSWTPDTDVEVTPVAADTEEGRSVIRHSCAHVLAQAVQELFPQAKLGIGPPITDGFYYDFDVEEPFTPEDLERLEKRMRQIIKDGQLFSRRVYESKDAAREELANEPYKLELVDDKSGDPDVMEVGGDELTAYDNLNARTKERVWGDLCRGPHIPTTRYIPAFKLTRSSAAYWRGDQNNASLQRIYGTAWESQEALDRHLELIEEAQRRDHRKLGVELDLFSFPDELGSGLPVFHPRGGVVRRELEDYSRRKHLEAGYEFVNTPHITKEQLYVTSGHLEWYADGMFPAMHIDAEYDADGQVRKPGQNYYLKPMNCPMHHLIFRSRGRSYRELPLRLFEFGSVYRYEKSGVVHGLTRVRGMTQDDAHIYTTREQMRDELTRLLEFVLSLLKDYGLDDYYLELSTKDPEKYVGSDEIWEEATETLREVAEASGLDLVPDPGGAAFYGPKISVQVKDALGRSWQMSTIQLDFNMPDRFELEYTAADGSRRRPVLIHRALFGSIERFFGVLTEHYAGAFPAWLAPVQVVGIPVADAHTPYLEEVAAQLKSRGVRVEVDSSDDRMAKKIVNHTNMKVPFMLLAGDKDAEAGAVSFRFGDRTQINGVPRDEAVEMIVRWIADRINEVPTAETVKAGAAK.

One can recognise a TGS domain in the interval 1 to 66; that stretch reads MTAVASSAPA…DTDVEVTPVA (66 aa). Residues 261 to 567 form a catalytic region; the sequence is DHRKLGVELD…LTEHYAGAFP (307 aa). Zn(2+) is bound by residues Cys366, His417, and His544.

It belongs to the class-II aminoacyl-tRNA synthetase family. In terms of assembly, homodimer. Zn(2+) serves as cofactor.

It localises to the cytoplasm. The enzyme catalyses tRNA(Thr) + L-threonine + ATP = L-threonyl-tRNA(Thr) + AMP + diphosphate + H(+). Functionally, catalyzes the attachment of threonine to tRNA(Thr) in a two-step reaction: L-threonine is first activated by ATP to form Thr-AMP and then transferred to the acceptor end of tRNA(Thr). Also edits incorrectly charged L-seryl-tRNA(Thr). The sequence is that of Threonine--tRNA ligase from Mycolicibacterium smegmatis (strain ATCC 700084 / mc(2)155) (Mycobacterium smegmatis).